A 356-amino-acid polypeptide reads, in one-letter code: DNA polymerase IV (356 aa).

Positions 6 to 187 (IIHIDMDAFY…QPIRRLHGVG (182 aa)) constitute a UmuC domain. Mg(2+)-binding residues include Asp10 and Asp105. Glu106 is an active-site residue.

This sequence belongs to the DNA polymerase type-Y family. In terms of assembly, monomer. The cofactor is Mg(2+).

The protein resides in the cytoplasm. It carries out the reaction DNA(n) + a 2'-deoxyribonucleoside 5'-triphosphate = DNA(n+1) + diphosphate. Its function is as follows. Poorly processive, error-prone DNA polymerase involved in untargeted mutagenesis. Copies undamaged DNA at stalled replication forks, which arise in vivo from mismatched or misaligned primer ends. These misaligned primers can be extended by PolIV. Exhibits no 3'-5' exonuclease (proofreading) activity. May be involved in translesional synthesis, in conjunction with the beta clamp from PolIII. The protein is DNA polymerase IV of Halorhodospira halophila (strain DSM 244 / SL1) (Ectothiorhodospira halophila (strain DSM 244 / SL1)).